Reading from the N-terminus, the 203-residue chain is Large ribosomal subunit protein bL25 (203 aa).

It belongs to the bacterial ribosomal protein bL25 family. CTC subfamily. Part of the 50S ribosomal subunit; part of the 5S rRNA/L5/L18/L25 subcomplex. Contacts the 5S rRNA. Binds to the 5S rRNA independently of L5 and L18.

This is one of the proteins that binds to the 5S RNA in the ribosome where it forms part of the central protuberance. This Rickettsia africae (strain ESF-5) protein is Large ribosomal subunit protein bL25.